A 545-amino-acid chain; its full sequence is Membrane protein insertase YidC (545 aa).

The next 4 membrane-spanning stretches (helical) occupy residues 350 to 370 (IIGNWGWAIIVLTIIVKAVLY), 424 to 444 (LPMLLQIPVFIGLYWALFASV), 461 to 481 (ADPYYILPIIMAATMFAQTYL), and 498 to 518 (PLVFSVMFFFFPAGLVLYWVI).

This sequence belongs to the OXA1/ALB3/YidC family. Type 1 subfamily. In terms of assembly, interacts with the Sec translocase complex via SecD. Specifically interacts with transmembrane segments of nascent integral membrane proteins during membrane integration.

It localises to the cell inner membrane. Its function is as follows. Required for the insertion and/or proper folding and/or complex formation of integral membrane proteins into the membrane. Involved in integration of membrane proteins that insert both dependently and independently of the Sec translocase complex, as well as at least some lipoproteins. Aids folding of multispanning membrane proteins. The polypeptide is Membrane protein insertase YidC (Neisseria meningitidis serogroup A / serotype 4A (strain DSM 15465 / Z2491)).